Reading from the N-terminus, the 292-residue chain is Tricin synthase 2 (292 aa).

Residues 21 to 46 (RTTPASRVSSTAMAAANGDASHGANG) form a disordered region. The segment covering 23–32 (TPASRVSSTA) has biased composition (polar residues). S-adenosyl-L-methionine contacts are provided by residues Ser-108, Glu-130, 132 to 133 (GV), Ser-138, Asp-156, and Ala-185. Asp-208 is a binding site for a divalent metal cation. Asp-210 provides a ligand contact to S-adenosyl-L-methionine. The a divalent metal cation site is built by Asp-234 and Asn-235.

This sequence belongs to the class I-like SAM-binding methyltransferase superfamily. Cation-dependent O-methyltransferase family. CCoAMT subfamily. Requires Mg(2+) as cofactor. The cofactor is Mn(2+). In terms of tissue distribution, expressed in stems only.

The enzyme catalyses tricetin + 2 S-adenosyl-L-methionine = 3',5'-di-O-methyltricetin + 2 S-adenosyl-L-homocysteine + 2 H(+). Its function is as follows. Catalyzes the stepwise methylation of tricetin to its 3'-mono- and 3',5'-dimethyl ethers. No 3',4',5'-trimethylated ester derivatives are produced. Can use caffeoyl CoA, 5-hydroxyferulic acid, luteolin, tricetin, quercetin, myrcetin and 7,8-dihydroxyflavone as substrates, but not naringenin, apigenin or kaempferol. The 2,3-double bond and the O-dihydroxyl group of the substrate are both required for catalytic activity of the enzyme. The polypeptide is Tricin synthase 2 (ROMT-17) (Oryza sativa subsp. japonica (Rice)).